A 340-amino-acid polypeptide reads, in one-letter code: Probable complex I intermediate-associated protein 30, mitochondrial (340 aa).

It belongs to the CIA30 family.

It localises to the mitochondrion. In terms of biological role, chaperone protein involved in the assembly of the mitochondrial NADH:ubiquinone oxidoreductase complex (complex I). Required for normal growth and reproduction. This chain is Probable complex I intermediate-associated protein 30, mitochondrial (nuaf-1), found in Caenorhabditis elegans.